A 318-amino-acid chain; its full sequence is HPr kinase/phosphorylase (318 aa).

Active-site residues include histidine 146 and lysine 167. 161–168 (GESGLGKS) is a binding site for ATP. Serine 168 contributes to the Mg(2+) binding site. Aspartate 185 serves as the catalytic Proton acceptor; for phosphorylation activity. Proton donor; for dephosphorylation activity. The segment at 209–218 (LEVRGIGLLD) is important for the catalytic mechanism of both phosphorylation and dephosphorylation. Glutamate 210 is a Mg(2+) binding site. Arginine 252 is an active-site residue. The segment at 273–278 (QVVAGR) is important for the catalytic mechanism of dephosphorylation.

Belongs to the HPrK/P family. In terms of assembly, homohexamer. It depends on Mg(2+) as a cofactor.

It catalyses the reaction [HPr protein]-L-serine + ATP = [HPr protein]-O-phospho-L-serine + ADP + H(+). It carries out the reaction [HPr protein]-O-phospho-L-serine + phosphate + H(+) = [HPr protein]-L-serine + diphosphate. Catalyzes the ATP- as well as the pyrophosphate-dependent phosphorylation of a specific serine residue in HPr, a phosphocarrier protein of the phosphoenolpyruvate-dependent sugar phosphotransferase system (PTS). HprK/P also catalyzes the pyrophosphate-producing, inorganic phosphate-dependent dephosphorylation (phosphorolysis) of seryl-phosphorylated HPr (P-Ser-HPr). This is HPr kinase/phosphorylase from Acidovorax sp. (strain JS42).